Here is a 470-residue protein sequence, read N- to C-terminus: Argininosuccinate lyase (470 aa).

Belongs to the lyase 1 family. Argininosuccinate lyase subfamily.

Its subcellular location is the cytoplasm. The catalysed reaction is 2-(N(omega)-L-arginino)succinate = fumarate + L-arginine. It participates in amino-acid biosynthesis; L-arginine biosynthesis; L-arginine from L-ornithine and carbamoyl phosphate: step 3/3. This chain is Argininosuccinate lyase, found in Leptospira borgpetersenii serovar Hardjo-bovis (strain JB197).